Here is a 351-residue protein sequence, read N- to C-terminus: Photosystem II D2 protein (351 aa).

Residues 39–59 traverse the membrane as a helical segment; it reads TAYLALGGWFTGTTFVTSWYT. Residue His116 participates in chlorophyll a binding. Residues 123 to 139 form a helical membrane-spanning segment; the sequence is GFMLRQFEIARLVGIRP. Pheophytin a-binding residues include Gln128 and Asn141. Residues 151 to 164 form a helical membrane-spanning segment; it reads VFLACFLIYPLGQH. Position 196 (His196) interacts with chlorophyll a. Residues 206-226 traverse the membrane as a helical segment; sequence GALLCGIHGATVQNTLFEDGA. A plastoquinone contacts are provided by His213 and Phe260. His213 lines the Fe cation pocket. Residue His267 participates in Fe cation binding. A helical membrane pass occupies residues 277 to 293; it reads GMWTPSVGIVGLAVNLR.

It belongs to the reaction center PufL/M/PsbA/D family. PSII is composed of 1 copy each of membrane proteins PsbA, PsbB, PsbC, PsbD, PsbE, PsbF, PsbH, PsbI, PsbJ, PsbK, PsbL, PsbM, PsbT, PsbX, PsbY, Psb30/Ycf12, peripheral proteins PsbO, CyanoQ (PsbQ), PsbU, PsbV and a large number of cofactors. It forms dimeric complexes. It depends on The D1/D2 heterodimer binds P680, chlorophylls that are the primary electron donor of PSII, and subsequent electron acceptors. It shares a non-heme iron and each subunit binds pheophytin, quinone, additional chlorophylls, carotenoids and lipids. There is also a Cl(-1) ion associated with D1 and D2, which is required for oxygen evolution. The PSII complex binds additional chlorophylls, carotenoids and specific lipids. as a cofactor.

The protein resides in the cellular thylakoid membrane. The catalysed reaction is 2 a plastoquinone + 4 hnu + 2 H2O = 2 a plastoquinol + O2. Photosystem II (PSII) is a light-driven water:plastoquinone oxidoreductase that uses light energy to abstract electrons from H(2)O, generating O(2) and a proton gradient subsequently used for ATP formation. It consists of a core antenna complex that captures photons, and an electron transfer chain that converts photonic excitation into a charge separation. The D1/D2 (PsbA/PsbD) reaction center heterodimer binds P680, the primary electron donor of PSII as well as several subsequent electron acceptors. D2 is needed for assembly of a stable PSII complex. This Prochlorococcus marinus (strain MIT 9313) protein is Photosystem II D2 protein.